Consider the following 211-residue polypeptide: uncharacterized protein (211 aa).

Positions 54, 56, 58, 59, 129, 148, and 189 each coordinate Zn(2+).

The protein belongs to the metallo-beta-lactamase superfamily. Glyoxalase II family. The cofactor is Zn(2+).

This is an uncharacterized protein from Aquifex aeolicus (strain VF5).